A 256-amino-acid chain; its full sequence is Neuroendocrine secretory protein 55 (256 aa).

An N-terminal signal peptide occupies residues 1–46 (MDRRSRAHQWRRARHNYNDLCPPIGRRAATALLWLSCSIALLRALA). The tract at residues 61 to 256 (SFLNAHHRSA…RKGPIPIRRH (196 aa)) is disordered. A compositionally biased stretch (basic and acidic residues) spans 86–103 (ESDHEHEEAEPELARPEC). Acidic residues-rich tracts occupy residues 104–139 (LEYD…ETEP) and 206–216 (LDEDPRDPEES). Over residues 225-236 (QPRRCKTRRPAR) the composition is skewed to basic residues.

Belongs to the NESP55 family. Post-translationally, binds keratan sulfate chains. May be proteolytically processed to give rise to a number of active peptides.

It localises to the cytoplasmic vesicle. The protein localises to the secretory vesicle. Its subcellular location is the synaptic vesicle. It is found in the secreted. The polypeptide is Neuroendocrine secretory protein 55 (Rattus norvegicus (Rat)).